The following is a 374-amino-acid chain: Peptide chain release factor 2 (374 aa).

At Q252 the chain carries N5-methylglutamine.

The protein belongs to the prokaryotic/mitochondrial release factor family. Post-translationally, methylated by PrmC. Methylation increases the termination efficiency of RF2.

The protein resides in the cytoplasm. In terms of biological role, peptide chain release factor 2 directs the termination of translation in response to the peptide chain termination codons UGA and UAA. This Stenotrophomonas maltophilia (strain R551-3) protein is Peptide chain release factor 2.